The chain runs to 320 residues: Foldase protein PrsA (320 aa).

A signal peptide spans Met-1–Ala-20. Cys-21 carries N-palmitoyl cysteine lipidation. Cys-21 carries the S-diacylglycerol cysteine lipid modification. In terms of domain architecture, PpiC spans Glu-139–Lys-245. Residues Glu-159 to Ala-198 are disordered.

This sequence belongs to the PrsA family.

The protein resides in the cell membrane. The catalysed reaction is [protein]-peptidylproline (omega=180) = [protein]-peptidylproline (omega=0). Plays a major role in protein secretion by helping the post-translocational extracellular folding of several secreted proteins. The chain is Foldase protein PrsA from Staphylococcus aureus (strain bovine RF122 / ET3-1).